A 156-amino-acid polypeptide reads, in one-letter code: Transcription elongation factor GreA (156 aa).

Residues 2-27 (EKTFPMTKEGLDKLKAELENLKLVKR) adopt a coiled-coil conformation.

The protein belongs to the GreA/GreB family.

In terms of biological role, necessary for efficient RNA polymerase transcription elongation past template-encoded arresting sites. The arresting sites in DNA have the property of trapping a certain fraction of elongating RNA polymerases that pass through, resulting in locked ternary complexes. Cleavage of the nascent transcript by cleavage factors such as GreA or GreB allows the resumption of elongation from the new 3'terminus. GreA releases sequences of 2 to 3 nucleotides. In Lactococcus lactis subsp. cremoris (strain SK11), this protein is Transcription elongation factor GreA.